The sequence spans 95 residues: Secretoglobin family 1C member 1 (95 aa).

The signal sequence occupies residues 1–23 (MKGSSALLLVALSLLCVCGLTRA).

The protein belongs to the secretoglobin family.

Its subcellular location is the secreted. This is Secretoglobin family 1C member 1 (Scgb1c1) from Mus musculus (Mouse).